A 1238-amino-acid polypeptide reads, in one-letter code: DNA-directed RNA polymerase subunit beta (1238 aa).

It belongs to the RNA polymerase beta chain family. The RNAP catalytic core consists of 2 alpha, 1 beta, 1 beta' and 1 omega subunit. When a sigma factor is associated with the core the holoenzyme is formed, which can initiate transcription.

It catalyses the reaction RNA(n) + a ribonucleoside 5'-triphosphate = RNA(n+1) + diphosphate. DNA-dependent RNA polymerase catalyzes the transcription of DNA into RNA using the four ribonucleoside triphosphates as substrates. This Clostridioides difficile (strain 630) (Peptoclostridium difficile) protein is DNA-directed RNA polymerase subunit beta.